A 240-amino-acid chain; its full sequence is uncharacterized protein (240 aa).

A run of 2 helical transmembrane segments spans residues 16-36 and 67-87; these read AVFF…YFIP and FITA…VIAM.

Its subcellular location is the cell membrane. This is an uncharacterized protein from Bacillus subtilis (strain 168).